The primary structure comprises 212 residues: Ribonuclease HII (212 aa).

Residues 4 to 206 (EVQCGIDEAG…YKKIKEDVES (203 aa)) form the RNase H type-2 domain. A divalent metal cation-binding residues include Asp10, Glu11, and Asp103.

The protein belongs to the RNase HII family. Mn(2+) serves as cofactor. Requires Mg(2+) as cofactor.

The protein resides in the cytoplasm. The catalysed reaction is Endonucleolytic cleavage to 5'-phosphomonoester.. Functionally, endonuclease that specifically degrades the RNA of RNA-DNA hybrids. The sequence is that of Ribonuclease HII from Thermoplasma volcanium (strain ATCC 51530 / DSM 4299 / JCM 9571 / NBRC 15438 / GSS1).